Consider the following 121-residue polypeptide: UPF0295 protein BH0952 (121 aa).

Helical transmembrane passes span 12–32 (IRTF…IGIF) and 41–61 (VLAM…YFWI).

The protein belongs to the UPF0295 family.

The protein resides in the cell membrane. The chain is UPF0295 protein BH0952 from Halalkalibacterium halodurans (strain ATCC BAA-125 / DSM 18197 / FERM 7344 / JCM 9153 / C-125) (Bacillus halodurans).